We begin with the raw amino-acid sequence, 440 residues long: Adenylosuccinate synthetase (440 aa).

GTP-binding positions include 14-20 (GDEGKGK) and 42-44 (GHT). Residue D15 is the Proton acceptor of the active site. Mg(2+) is bound by residues D15 and G42. IMP-binding positions include 15–18 (DEGK), 40–43 (NAGH), T131, R145, Q226, T241, and R313. The Proton donor role is filled by H43. 309–315 (ATTGRQR) contacts substrate. GTP-binding positions include R315, 341–343 (KLD), and 423–425 (STG).

Belongs to the adenylosuccinate synthetase family. Homodimer. Mg(2+) is required as a cofactor.

The protein resides in the cytoplasm. It catalyses the reaction IMP + L-aspartate + GTP = N(6)-(1,2-dicarboxyethyl)-AMP + GDP + phosphate + 2 H(+). It functions in the pathway purine metabolism; AMP biosynthesis via de novo pathway; AMP from IMP: step 1/2. Functionally, plays an important role in the de novo pathway of purine nucleotide biosynthesis. Catalyzes the first committed step in the biosynthesis of AMP from IMP. This Hydrogenovibrio crunogenus (strain DSM 25203 / XCL-2) (Thiomicrospira crunogena) protein is Adenylosuccinate synthetase.